The following is a 356-amino-acid chain: Phospho-N-acetylmuramoyl-pentapeptide-transferase (356 aa).

10 consecutive transmembrane segments (helical) span residues Ile4–His24, Gly53–Trp73, Pro76–Leu96, Leu116–Val136, Ile152–Gly172, Leu186–Phe206, Asp228–Ala248, Ile253–Val273, Leu278–Val298, and Phe333–Val353.

This sequence belongs to the glycosyltransferase 4 family. MraY subfamily. Mg(2+) is required as a cofactor.

It is found in the cell membrane. The catalysed reaction is UDP-N-acetyl-alpha-D-muramoyl-L-alanyl-gamma-D-glutamyl-meso-2,6-diaminopimeloyl-D-alanyl-D-alanine + di-trans,octa-cis-undecaprenyl phosphate = di-trans,octa-cis-undecaprenyl diphospho-N-acetyl-alpha-D-muramoyl-L-alanyl-D-glutamyl-meso-2,6-diaminopimeloyl-D-alanyl-D-alanine + UMP. It participates in cell wall biogenesis; peptidoglycan biosynthesis. Its function is as follows. Catalyzes the initial step of the lipid cycle reactions in the biosynthesis of the cell wall peptidoglycan: transfers peptidoglycan precursor phospho-MurNAc-pentapeptide from UDP-MurNAc-pentapeptide onto the lipid carrier undecaprenyl phosphate, yielding undecaprenyl-pyrophosphoryl-MurNAc-pentapeptide, known as lipid I. This chain is Phospho-N-acetylmuramoyl-pentapeptide-transferase, found in Cutibacterium acnes (strain DSM 16379 / KPA171202) (Propionibacterium acnes).